The sequence spans 732 residues: uncharacterized protein (732 aa).

This sequence belongs to the mimivirus L137 family.

This is an uncharacterized protein from Acanthamoeba polyphaga mimivirus (APMV).